The sequence spans 703 residues: Polyribonucleotide nucleotidyltransferase (703 aa).

The Mg(2+) site is built by Asp-486 and Asp-492. Residues 553-614 (PRITTIWIKP…AACDAAIQMI (62 aa)) enclose the KH domain. In terms of domain architecture, S1 motif spans 624–692 (GKLYMGTVKK…KQGKIKLSRK (69 aa)).

It belongs to the polyribonucleotide nucleotidyltransferase family. It depends on Mg(2+) as a cofactor.

Its subcellular location is the cytoplasm. It carries out the reaction RNA(n+1) + phosphate = RNA(n) + a ribonucleoside 5'-diphosphate. Functionally, involved in mRNA degradation. Catalyzes the phosphorolysis of single-stranded polyribonucleotides processively in the 3'- to 5'-direction. This is Polyribonucleotide nucleotidyltransferase from Trichlorobacter lovleyi (strain ATCC BAA-1151 / DSM 17278 / SZ) (Geobacter lovleyi).